We begin with the raw amino-acid sequence, 99 residues long: RNA-binding protein Hfq (99 aa).

The Sm domain maps to 10 to 71 (DLFLNQLRKE…ISSILPSKPI (62 aa)). The interval 77 to 99 (VQNSQVQNTASQQSNNNQNQESK) is disordered.

It belongs to the Hfq family. In terms of assembly, homohexamer.

Its function is as follows. RNA chaperone that binds small regulatory RNA (sRNAs) and mRNAs to facilitate mRNA translational regulation in response to envelope stress, environmental stress and changes in metabolite concentrations. Also binds with high specificity to tRNAs. The sequence is that of RNA-binding protein Hfq from Caldicellulosiruptor saccharolyticus (strain ATCC 43494 / DSM 8903 / Tp8T 6331).